The following is a 1343-amino-acid chain: Protein cordon-bleu (1343 aa).

Disordered regions lie at residues 1-51 (MNLG…GDCK), 301-479 (KVEL…PAAE), 522-613 (VSVA…NGYE), 733-808 (IDKP…TRVL), 1056-1077 (EKPT…KSLD), and 1105-1148 (INNF…NVFG). Positions 20–30 (APPPPRPPQPA) are enriched in pro residues. The KKRRAP 1 signature appears at 305–310 (KKRRAP). Residues 324-335 (SQISLGSPSSHN) show a composition bias toward polar residues. Positions 338–343 (KKRKAP) match the KKRRAP 2 motif. Over residues 343-354 (PAPPPTPPPSTP) the composition is skewed to pro residues. Positions 390–400 (DLSHSIEDSEP) are enriched in basic and acidic residues. Positions 406 to 422 (SSSSGDDAAAVGSSSSS) are enriched in low complexity. The segment covering 445–460 (PEPKPEYEPELKKEAS) has biased composition (basic and acidic residues). Residues 552–573 (ERMQSVSPMDIMSLNSDSTLPV) show a composition bias toward polar residues. Positions 746-757 (PSQDAKITDNME) are enriched in basic and acidic residues. Over residues 773–789 (VELTSQKDTVLQKSQSF) the composition is skewed to polar residues. Over residues 1105–1122 (INNFPDTSSARQTPTDTT) the composition is skewed to polar residues. Residues 1128–1137 (KKPELHKSEI) show a composition bias toward basic and acidic residues. WH2 domains are found at residues 1167-1187 (IHSS…LRKV) and 1207-1227 (ERSA…LKKT). Residues 1246 to 1297 (NVHTEVISPRPTSPDFVPPLPPSFSPPPPPPPPLAPAKPPVVLPPGGNPEAA) are disordered. The segment covering 1261-1292 (FVPPLPPSFSPPPPPPPPLAPAKPPVVLPPGG) has biased composition (pro residues). The region spanning 1297-1317 (AREALLEAIRSGSGAQQLRKV) is the WH2 3 domain.

Interacts with pacsin1.

It is found in the cell membrane. The protein localises to the cytoplasm. Its subcellular location is the cytoskeleton. The protein resides in the cell projection. It localises to the ruffle. It is found in the cytosol. In terms of biological role, plays an important role in the reorganization of the actin cytoskeleton. Binds to and sequesters actin monomers (G actin). Nucleates actin polymerization by assembling three actin monomers in cross-filament orientation and thereby promotes growth of actin filaments at the barbed end. Can also mediate actin depolymerization at barbed ends and severing of actin filaments. Promotes formation of cell ruffles. Regulates neuron morphogenesis and increases branching of axons and dendrites. Required for normal embryonic development, including normal development of laterality, normal body size and shape, as well as normal brain, heart and kidney development. Required for normal development of stereocilia and kinocilia in sensory hair cells of neuromasts in the posterior lateral line organ, and thus also for balance keeping and normal swimming behavior. In Danio rerio (Zebrafish), this protein is Protein cordon-bleu (cobl).